The sequence spans 342 residues: Nicotinate-nucleotide--dimethylbenzimidazole phosphoribosyltransferase (342 aa).

Residue glutamate 311 is the Proton acceptor of the active site.

The protein belongs to the CobT family.

It carries out the reaction 5,6-dimethylbenzimidazole + nicotinate beta-D-ribonucleotide = alpha-ribazole 5'-phosphate + nicotinate + H(+). Its pathway is nucleoside biosynthesis; alpha-ribazole biosynthesis; alpha-ribazole from 5,6-dimethylbenzimidazole: step 1/2. In terms of biological role, catalyzes the synthesis of alpha-ribazole-5'-phosphate from nicotinate mononucleotide (NAMN) and 5,6-dimethylbenzimidazole (DMB). The chain is Nicotinate-nucleotide--dimethylbenzimidazole phosphoribosyltransferase from Shewanella loihica (strain ATCC BAA-1088 / PV-4).